A 74-amino-acid polypeptide reads, in one-letter code: Peptide BmKb2 (74 aa).

The N-terminal stretch at 1–22 is a signal peptide; it reads MEIKYLLTVFLVLLIVSDHCQA. Lysine 40 carries the post-translational modification Lysine amide. A propeptide spanning residues 46-74 is cleaved from the precursor; sequence DLNGQIDHFKNFRKRDAELEELLSKLPIY.

It belongs to the non-disulfide-bridged peptide (NDBP) superfamily. Short antimicrobial peptide (group 4) family.

Its subcellular location is the secreted. The protein localises to the target cell membrane. In terms of biological role, antibacterial peptide. This peptide gene is up-regulated at the transcriptional level after the venom gland is challenged by Gram-positive bacteria. The polypeptide is Peptide BmKb2 (Olivierus martensii (Manchurian scorpion)).